The following is a 63-amino-acid chain: Small ribosomal subunit protein eS17 (63 aa).

The protein belongs to the eukaryotic ribosomal protein eS17 family.

This is Small ribosomal subunit protein eS17 from Methanococcus aeolicus (strain ATCC BAA-1280 / DSM 17508 / OCM 812 / Nankai-3).